Consider the following 227-residue polypeptide: MSSTSEATVIHMDGAAGKTPATAVPPPPPPAPTAPVQQQRKAGGVPFLLRSGAEGFRRCMALLDLLLRVAAMGPTLAAAISTGTSDETLSVFTHYFQFRARFDDFSAFTFFMVANAVAAGYLLMSLPFSAFGVIRPKATSVRLLLLICDTIMVVLVTAAASAAAAIVYVAHEGNRRANWVPICMQFHGFCKRTSGAVVASFLAVLIFILLVFLGACAIRRRHTTTKH.

The Cytoplasmic segment spans residues 1–59 (MSSTSEATVIHMDGAAGKTPATAVPPPPPPAPTAPVQQQRKAGGVPFLLRSGAEGFRRC). The tract at residues 17 to 37 (GKTPATAVPPPPPPAPTAPVQ) is disordered. The span at 23–33 (AVPPPPPPAPT) shows a compositional bias: pro residues. A helical membrane pass occupies residues 60 to 80 (MALLDLLLRVAAMGPTLAAAI). Over 81 to 107 (STGTSDETLSVFTHYFQFRARFDDFSA) the chain is Extracellular. Residues 108–128 (FTFFMVANAVAAGYLLMSLPF) traverse the membrane as a helical segment. Residues 129 to 149 (SAFGVIRPKATSVRLLLLICD) are Cytoplasmic-facing. The chain crosses the membrane as a helical span at residues 150 to 170 (TIMVVLVTAAASAAAAIVYVA). The Extracellular segment spans residues 171–197 (HEGNRRANWVPICMQFHGFCKRTSGAV). The helical transmembrane segment at 198–218 (VASFLAVLIFILLVFLGACAI) threads the bilayer. At 219–227 (RRRHTTTKH) the chain is on the cytoplasmic side.

Belongs to the Casparian strip membrane proteins (CASP) family. Homodimer and heterodimers.

Its subcellular location is the cell membrane. Regulates membrane-cell wall junctions and localized cell wall deposition. Required for establishment of the Casparian strip membrane domain (CSD) and the subsequent formation of Casparian strips, a cell wall modification of the root endodermis that determines an apoplastic barrier between the intraorganismal apoplasm and the extraorganismal apoplasm and prevents lateral diffusion. The sequence is that of Casparian strip membrane protein 2 from Brachypodium distachyon (Purple false brome).